A 57-amino-acid chain; its full sequence is UPF0337 protein SCO0678 (57 aa).

Composition is skewed to basic and acidic residues over residues 1–22 (MAGNEKSRAKMEQAKGKAKEAA) and 42–57 (GDARQAKEKGKDVFRH). Residues 1 to 57 (MAGNEKSRAKMEQAKGKAKEAAGRAVGNERMTAEGRAAQSKGDARQAKEKGKDVFRH) are disordered.

It belongs to the UPF0337 (CsbD) family.

The chain is UPF0337 protein SCO0678 from Streptomyces coelicolor (strain ATCC BAA-471 / A3(2) / M145).